The following is a 314-amino-acid chain: ATP synthase gamma chain (314 aa).

Belongs to the ATPase gamma chain family. In terms of assembly, F-type ATPases have 2 components, CF(1) - the catalytic core - and CF(0) - the membrane proton channel. CF(1) has five subunits: alpha(3), beta(3), gamma(1), delta(1), epsilon(1). CF(0) has three main subunits: a, b and c.

The protein localises to the cellular thylakoid membrane. Functionally, produces ATP from ADP in the presence of a proton gradient across the membrane. The gamma chain is believed to be important in regulating ATPase activity and the flow of protons through the CF(0) complex. The sequence is that of ATP synthase gamma chain from Picosynechococcus sp. (strain ATCC 27264 / PCC 7002 / PR-6) (Agmenellum quadruplicatum).